The following is a 63-amino-acid chain: Protein DsrB (63 aa).

This sequence belongs to the DsrB family.

The chain is Protein DsrB from Yersinia pseudotuberculosis serotype O:3 (strain YPIII).